Here is a 105-residue protein sequence, read N- to C-terminus: Small ribosomal subunit protein uS10 (105 aa).

Belongs to the universal ribosomal protein uS10 family. In terms of assembly, part of the 30S ribosomal subunit.

Functionally, involved in the binding of tRNA to the ribosomes. This is Small ribosomal subunit protein uS10 from Francisella philomiragia subsp. philomiragia (strain ATCC 25017 / CCUG 19701 / FSC 153 / O#319-036).